The sequence spans 246 residues: DNA repair protein RecO (246 aa).

This sequence belongs to the RecO family.

In terms of biological role, involved in DNA repair and RecF pathway recombination. This chain is DNA repair protein RecO, found in Methylobacterium nodulans (strain LMG 21967 / CNCM I-2342 / ORS 2060).